The primary structure comprises 501 residues: Glucans biosynthesis protein G (501 aa).

Residues 1-24 form the signal peptide; it reads MNRRQVLAALAAIPLLPEAFPANA.

The protein belongs to the OpgD/OpgG family.

The protein localises to the periplasm. The protein operates within glycan metabolism; osmoregulated periplasmic glucan (OPG) biosynthesis. Functionally, involved in the biosynthesis of osmoregulated periplasmic glucans (OPGs). This chain is Glucans biosynthesis protein G, found in Rhodopseudomonas palustris (strain BisA53).